The primary structure comprises 1155 residues: Eukaryotic translation initiation factor 3 subunit A (1155 aa).

A PCI domain is found at 319 to 502 (LQRMAAHVLL…NSIYFGTDLT (184 aa)). Disordered stretches follow at residues 589 to 613 (QNNA…LAEQ) and 836 to 1155 (AAEA…VKRR). 4 stretches are compositionally biased toward basic and acidic residues: residues 836 to 900 (AAEA…RGGD), 925 to 987 (DRNE…EPDS), 1004 to 1057 (SRDD…DAAP), and 1066 to 1101 (DAPR…RAPK). The segment covering 1104-1118 (GPSGGTGTAASGGGN) has biased composition (gly residues). The segment covering 1125–1145 (PRDEPAPKRDQPQDKENKAVD) has biased composition (basic and acidic residues).

The protein belongs to the eIF-3 subunit A family. As to quaternary structure, component of the eukaryotic translation initiation factor 3 (eIF-3) complex. The eIF-3 complex interacts with pix.

It is found in the cytoplasm. Functionally, RNA-binding component of the eukaryotic translation initiation factor 3 (eIF-3) complex, which is involved in protein synthesis of a specialized repertoire of mRNAs and, together with other initiation factors, stimulates binding of mRNA and methionyl-tRNAi to the 40S ribosome. The eIF-3 complex specifically targets and initiates translation of a subset of mRNAs involved in cell proliferation. The sequence is that of Eukaryotic translation initiation factor 3 subunit A from Drosophila pseudoobscura pseudoobscura (Fruit fly).